A 479-amino-acid polypeptide reads, in one-letter code: Transmembrane protein 161A (479 aa).

The N-terminal stretch at 1 to 28 (MAVLGVQLVVTLLTATLMHRLAPHCSFA) is a signal peptide. Over 29–98 (RWLLCNGSLF…LTTVDALVLR (70 aa)) the chain is Extracellular. N-linked (GlcNAc...) asparagine glycosylation is present at Asn-34. A Phosphoserine modification is found at Ser-69. A helical membrane pass occupies residues 99–119 (FFLEYQWFVDFAVYSGGVYLF). The Cytoplasmic portion of the chain corresponds to 120 to 134 (TEAYYYMLGPAKETN). Residues 135–155 (IAVFWCLLTVTFSIKMFLTVT) form a helical membrane-spanning segment. The Extracellular segment spans residues 156-166 (RLYFSAEEGGE). The helical transmembrane segment at 167–187 (RSVCLTFAFLFLLLAMLVQVV) threads the bilayer. The Cytoplasmic portion of the chain corresponds to 188-224 (REETLELGLEPGLASMTQNLEPLLKKQGWDWALPVAK). Residues 225 to 245 (LAIRVGLAVVGSVLGAFLTFP) traverse the membrane as a helical segment. Residues 246–263 (GLRLAQTHRDALTMSEDR) are Extracellular-facing. The chain crosses the membrane as a helical span at residues 264-284 (PMLQFLLHTSFLSPLFILWLW). Residues 285 to 304 (TKPIARDFLHQPPFGETRFS) are Cytoplasmic-facing. The helical transmembrane segment at 305–325 (LLSDSAFDSGRLWLLVVLCLL) threads the bilayer. Topologically, residues 326–370 (RLAVTRPHLQAYLCLAKARVEQLRREAGRIEAREIQQRVVRVYCY) are extracellular. Residues 371 to 391 (VTVVSLQYLTPLILTLNCTLL) traverse the membrane as a helical segment. Residues 392-449 (LKTLGGYSWGLGPAPLLSPDPSSASAAPIGSGEDEVQQTAARIAGALGGLLTPLFLRG) lie on the Cytoplasmic side of the membrane. The helical transmembrane segment at 450 to 470 (VLAYLIWWTAACQLLASLFGL) threads the bilayer. Residues 471-479 (YFHQHLAGS) lie on the Extracellular side of the membrane.

The protein belongs to the TMEM161 family.

The protein resides in the membrane. Functionally, may play a role in protection against oxidative stress. Overexpression leads to reduced levels of oxidant-induced DNA damage and apoptosis. This is Transmembrane protein 161A (TMEM161A) from Homo sapiens (Human).